The sequence spans 83 residues: uncharacterized protein (83 aa).

Residues 40 to 65 (RMQAGASPDEDNDVNGETSFSRSFGG) are disordered. Residues 54–65 (NGETSFSRSFGG) are compositionally biased toward polar residues.

This is an uncharacterized protein from Dictyostelium discoideum (Social amoeba).